The following is a 362-amino-acid chain: 3-dehydroquinate synthase (362 aa).

Residues 71-76 (DGEQYK), 105-109 (GVVGD), 129-130 (TT), lysine 142, lysine 151, and 169-172 (CLKT) contribute to the NAD(+) site. 3 residues coordinate Zn(2+): glutamate 184, histidine 247, and histidine 264.

This sequence belongs to the sugar phosphate cyclases superfamily. Dehydroquinate synthase family. It depends on Co(2+) as a cofactor. Zn(2+) serves as cofactor. NAD(+) is required as a cofactor.

Its subcellular location is the cytoplasm. It carries out the reaction 7-phospho-2-dehydro-3-deoxy-D-arabino-heptonate = 3-dehydroquinate + phosphate. It participates in metabolic intermediate biosynthesis; chorismate biosynthesis; chorismate from D-erythrose 4-phosphate and phosphoenolpyruvate: step 2/7. In terms of biological role, catalyzes the conversion of 3-deoxy-D-arabino-heptulosonate 7-phosphate (DAHP) to dehydroquinate (DHQ). This Escherichia coli O81 (strain ED1a) protein is 3-dehydroquinate synthase.